The following is a 405-amino-acid chain: Acetate kinase (405 aa).

Position 7 (Asn-7) interacts with Mg(2+). Lys-14 lines the ATP pocket. Substrate is bound at residue Arg-99. Asp-156 (proton donor/acceptor) is an active-site residue. 215–219 contributes to the ATP binding site; the sequence is HLGNG. Residue Glu-391 coordinates Mg(2+).

This sequence belongs to the acetokinase family. In terms of assembly, homodimer. Mg(2+) serves as cofactor. It depends on Mn(2+) as a cofactor.

Its subcellular location is the cytoplasm. It catalyses the reaction acetate + ATP = acetyl phosphate + ADP. Its pathway is metabolic intermediate biosynthesis; acetyl-CoA biosynthesis; acetyl-CoA from acetate: step 1/2. In terms of biological role, catalyzes the formation of acetyl phosphate from acetate and ATP. Can also catalyze the reverse reaction. The protein is Acetate kinase of Nostoc sp. (strain PCC 7120 / SAG 25.82 / UTEX 2576).